Consider the following 150-residue polypeptide: UPF0098 protein TC_0109 (150 aa).

The protein belongs to the UPF0098 family.

This chain is UPF0098 protein TC_0109, found in Chlamydia muridarum (strain MoPn / Nigg).